We begin with the raw amino-acid sequence, 517 residues long: Splicing factor U2AF 59 kDa subunit (517 aa).

Low complexity predominate over residues 1–13 (MDLSSRLSSGSSR). The disordered stretch occupies residues 1 to 112 (MDLSSRLSSG…PSRERSVRSI (112 aa)). Positions 20–89 (DYRDEEPRRE…RRYDDYEPRS (70 aa)) are enriched in basic and acidic residues. RRM domains follow at residues 310 to 388 (DKIY…FACV) and 418 to 509 (RVLQ…FYGE).

Belongs to the splicing factor SR family. In terms of assembly, forms a heterodimer with the U2AF small subunit. Can also form a homodimer. U2AF large subunit (U2AF59), U2AF small subunit (U2AF23) and SF1 (bpb1) interact to form a complex required for complex A formation. Interacts with wat1/pop3.

The protein resides in the nucleus. In terms of biological role, necessary for the splicing of pre-mRNA. The SF1-U2AF59-U2AF23 complex has a role in the recognition of the branch site (5'-UACUAAC-3'), the pyrimidine tract and the 3'-splice site at the 3'-end of introns. The sequence is that of Splicing factor U2AF 59 kDa subunit (prp2) from Schizosaccharomyces pombe (strain 972 / ATCC 24843) (Fission yeast).